The chain runs to 226 residues: E3 ubiquitin-protein ligase RNF186 (226 aa).

The segment at 39 to 85 (CLVCREPYNCARSPKLLSCQHTFCAVCLKLLLYVQEDTWSIPCPLCR) adopts an RING-type zinc-finger fold. 2 helical membrane-spanning segments follow: residues 157–177 (HLLLLALVIVLILPFIYPGVI) and 179–199 (WVLAFVIALALLMSTLFCCHP).

As to quaternary structure, interacts with BNIP1. Polyubiquitinated. 'Lys-29'-linked autoubiquitination leads to proteasomal degradation.

Its subcellular location is the endoplasmic reticulum membrane. It catalyses the reaction S-ubiquitinyl-[E2 ubiquitin-conjugating enzyme]-L-cysteine + [acceptor protein]-L-lysine = [E2 ubiquitin-conjugating enzyme]-L-cysteine + N(6)-ubiquitinyl-[acceptor protein]-L-lysine.. It functions in the pathway protein modification; protein ubiquitination. Its function is as follows. E3 ubiquitin protein ligase that is part of an apoptotic signaling pathway activated by endoplasmic reticulum stress. Stimulates the expression of proteins specific of the unfolded protein response (UPR), ubiquitinates BNIP1 and regulates its localization to the mitochondrion and induces calcium release from the endoplasmic reticulum that ultimately leads to cell apoptosis. Plays a role in the maintenance of intestinal homeostasis and clearance of enteric pathogens. Upon NOD2 stimulation, ubiquitinates the ER stress sensor activating transcription factor 6/ATF6 and promotes the unfolded protein response UPR. Participates in basal level of autophagy maintenance by regulating the ubiquitination of EPHB2. Upon stimulation by ligand EFNB1, ubiquitinates EPHB2 and further recruits MAP1LC3B for autophagy induction. Controls nutrient sensing by ubiquitinating Sestrin-2/SESN2, which is an intracellular sensor of cytosolic leucine and inhibitor of mTORC1 activity. The polypeptide is E3 ubiquitin-protein ligase RNF186 (Mus musculus (Mouse)).